A 171-amino-acid polypeptide reads, in one-letter code: Endoribonuclease YbeY (171 aa).

Zn(2+)-binding residues include histidine 130, histidine 134, and histidine 140.

The protein belongs to the endoribonuclease YbeY family. Zn(2+) is required as a cofactor.

Its subcellular location is the cytoplasm. In terms of biological role, single strand-specific metallo-endoribonuclease involved in late-stage 70S ribosome quality control and in maturation of the 3' terminus of the 16S rRNA. The chain is Endoribonuclease YbeY from Neisseria meningitidis serogroup C / serotype 2a (strain ATCC 700532 / DSM 15464 / FAM18).